The sequence spans 120 residues: C-C motif chemokine 27 (120 aa).

The signal sequence occupies residues 1–25 (MMEGLSPASSLPLLLLLLSPAPEAA). Disulfide bonds link Cys-34-Cys-63 and Cys-35-Cys-78.

It belongs to the intercrine beta (chemokine CC) family. In terms of assembly, monomer, dimer, and tetramer. Heparin avidly promotes oligomerization. Interacts with TNFAIP6 (via Link domain). Isoform 1 is predominantly expressed in placenta and weakly in skin. Isoform 2 is predominantly expressed in testes and brain, weakly in kidney and liver and even lower in heart and muscle. Low expression of both isoforms in other tissues.

Its subcellular location is the secreted. It localises to the nucleus. Functionally, chemotactic factor that attracts skin-associated memory T-lymphocytes. May play a role in mediating homing of lymphocytes to cutaneous sites. May play a role in cell migration during embryogenesis. Nuclear forms may facilitate cellular migration by inducing cytoskeletal relaxation. Binds to CCR10. This Mus musculus (Mouse) protein is C-C motif chemokine 27 (Ccl27).